The following is a 113-amino-acid chain: Large ribosomal subunit protein bL19 (113 aa).

Belongs to the bacterial ribosomal protein bL19 family.

Its function is as follows. This protein is located at the 30S-50S ribosomal subunit interface and may play a role in the structure and function of the aminoacyl-tRNA binding site. The sequence is that of Large ribosomal subunit protein bL19 from Mycolicibacterium vanbaalenii (strain DSM 7251 / JCM 13017 / BCRC 16820 / KCTC 9966 / NRRL B-24157 / PYR-1) (Mycobacterium vanbaalenii).